The primary structure comprises 375 residues: Phytanoyl-CoA hydroxylase-interacting protein-like (375 aa).

Residues S11, S12, and S15 each carry the phosphoserine modification. The N-linked (GlcNAc...) asparagine glycan is linked to N22. The residue at position 24 (S24) is a Phosphoserine. N-linked (GlcNAc...) asparagine glycosylation is present at N36. A Fibronectin type-III domain is found at 51–160 (VPHNIKINNI…EIIEFCTADY (110 aa)).

It belongs to the PHYHIP family.

May play a role in the development of the central system. The chain is Phytanoyl-CoA hydroxylase-interacting protein-like (Phyhipl) from Mus musculus (Mouse).